Reading from the N-terminus, the 213-residue chain is Orotidine 5'-phosphate decarboxylase (213 aa).

Residues D9, K31, 59 to 68 (DFKVADIPAT), S115, 166 to 176 (PGVGAQGGKIE), G191, and R192 each bind substrate. The active-site Proton donor is the K61.

It belongs to the OMP decarboxylase family. Type 1 subfamily. Homodimer.

The catalysed reaction is orotidine 5'-phosphate + H(+) = UMP + CO2. Its pathway is pyrimidine metabolism; UMP biosynthesis via de novo pathway; UMP from orotate: step 2/2. Functionally, catalyzes the decarboxylation of orotidine 5'-monophosphate (OMP) to uridine 5'-monophosphate (UMP). The protein is Orotidine 5'-phosphate decarboxylase of Methanocaldococcus jannaschii (strain ATCC 43067 / DSM 2661 / JAL-1 / JCM 10045 / NBRC 100440) (Methanococcus jannaschii).